Consider the following 194-residue polypeptide: Pyridoxal 5'-phosphate synthase subunit PdxT (194 aa).

50–52 (GES) is an L-glutamine binding site. C82 acts as the Nucleophile in catalysis. Residues R109 and 136–137 (IR) contribute to the L-glutamine site. Residues H172 and E174 each act as charge relay system in the active site.

The protein belongs to the glutaminase PdxT/SNO family. In terms of assembly, in the presence of PdxS, forms a dodecamer of heterodimers. Only shows activity in the heterodimer.

The enzyme catalyses aldehydo-D-ribose 5-phosphate + D-glyceraldehyde 3-phosphate + L-glutamine = pyridoxal 5'-phosphate + L-glutamate + phosphate + 3 H2O + H(+). The catalysed reaction is L-glutamine + H2O = L-glutamate + NH4(+). It participates in cofactor biosynthesis; pyridoxal 5'-phosphate biosynthesis. Its function is as follows. Catalyzes the hydrolysis of glutamine to glutamate and ammonia as part of the biosynthesis of pyridoxal 5'-phosphate. The resulting ammonia molecule is channeled to the active site of PdxS. The chain is Pyridoxal 5'-phosphate synthase subunit PdxT from Streptococcus pneumoniae (strain CGSP14).